The sequence spans 74 residues: uncharacterized protein (74 aa).

This is an uncharacterized protein from Vaccinia virus (strain Copenhagen) (VACV).